The chain runs to 294 residues: Glyceraldehyde-3-phosphate dehydrogenase (294 aa).

The NAD(+) site is built by aspartate 19, arginine 63, and threonine 105. D-glyceraldehyde 3-phosphate contacts are provided by residues 134 to 136 (SCT), threonine 165, 194 to 195 (TG), and arginine 217. Catalysis depends on cysteine 135, which acts as the Nucleophile.

It belongs to the glyceraldehyde-3-phosphate dehydrogenase family. In terms of assembly, homotetramer.

Its subcellular location is the cytoplasm. It carries out the reaction D-glyceraldehyde 3-phosphate + phosphate + NAD(+) = (2R)-3-phospho-glyceroyl phosphate + NADH + H(+). It participates in carbohydrate degradation; glycolysis; pyruvate from D-glyceraldehyde 3-phosphate: step 1/5. Its function is as follows. Catalyzes the oxidative phosphorylation of glyceraldehyde 3-phosphate (G3P) to 1,3-bisphosphoglycerate (BPG) using the cofactor NAD. The first reaction step involves the formation of a hemiacetal intermediate between G3P and a cysteine residue, and this hemiacetal intermediate is then oxidized to a thioester, with concomitant reduction of NAD to NADH. The reduced NADH is then exchanged with the second NAD, and the thioester is attacked by a nucleophilic inorganic phosphate to produce BPG. The polypeptide is Glyceraldehyde-3-phosphate dehydrogenase (gap) (Shimwellia blattae (Escherichia blattae)).